The sequence spans 216 residues: Pyrophosphatase PpaX (216 aa).

The active-site Nucleophile is D9.

It belongs to the HAD-like hydrolase superfamily. PpaX family. Mg(2+) is required as a cofactor.

The enzyme catalyses diphosphate + H2O = 2 phosphate + H(+). In terms of biological role, hydrolyzes pyrophosphate formed during P-Ser-HPr dephosphorylation by HPrK/P. Might play a role in controlling the intracellular pyrophosphate pool. The sequence is that of Pyrophosphatase PpaX from Bacillus anthracis (strain CDC 684 / NRRL 3495).